We begin with the raw amino-acid sequence, 978 residues long: Peroxisomal ATPase PEX6 (978 aa).

R119 bears the Omega-N-methylarginine mark. ATP-binding positions include 470–477 (GPPGSGKT) and 742–749 (GPPGTGKT).

Belongs to the AAA ATPase family. As to quaternary structure, interacts with PEX1; forming the PEX1-PEX6 AAA ATPase complex, which is composed of a heterohexamer formed by a trimer of PEX1-PEX6 dimers. Interacts with PEX26; interaction is direct and promotes recruitment to peroxisomal membranes. Interacts with ZFAND6.

The protein localises to the cytoplasm. It is found in the cytosol. It localises to the peroxisome membrane. Its subcellular location is the cell projection. The protein resides in the cilium. The protein localises to the photoreceptor outer segment. It catalyses the reaction ATP + H2O = ADP + phosphate + H(+). In terms of biological role, component of the PEX1-PEX6 AAA ATPase complex, a protein dislocase complex that mediates the ATP-dependent extraction of the PEX5 receptor from peroxisomal membranes, an essential step for PEX5 recycling. Specifically recognizes PEX5 monoubiquitinated at 'Cys-11', and pulls it out of the peroxisome lumen through the PEX2-PEX10-PEX12 retrotranslocation channel. Extraction by the PEX1-PEX6 AAA ATPase complex is accompanied by unfolding of the TPR repeats and release of bound cargo from PEX5. In Rattus norvegicus (Rat), this protein is Peroxisomal ATPase PEX6.